The primary structure comprises 55 residues: ATP synthase F(0) complex subunit 8 (55 aa).

Residues 7–24 traverse the membrane as a helical segment; sequence SPWFFIMLTTWLTFSLII.

This sequence belongs to the ATPase protein 8 family. Component of the ATP synthase complex composed at least of ATP5F1A/subunit alpha, ATP5F1B/subunit beta, ATP5MC1/subunit c (homooctomer), MT-ATP6/subunit a, MT-ATP8/subunit 8, ATP5ME/subunit e, ATP5MF/subunit f, ATP5MG/subunit g, ATP5MK/subunit k, ATP5MJ/subunit j, ATP5F1C/subunit gamma, ATP5F1D/subunit delta, ATP5F1E/subunit epsilon, ATP5PF/subunit F6, ATP5PB/subunit b, ATP5PD/subunit d, ATP5PO/subunit OSCP. ATP synthase complex consists of a soluble F(1) head domain (subunits alpha(3) and beta(3)) - the catalytic core - and a membrane F(0) domain - the membrane proton channel (subunits c, a, 8, e, f, g, k and j). These two domains are linked by a central stalk (subunits gamma, delta, and epsilon) rotating inside the F1 region and a stationary peripheral stalk (subunits F6, b, d, and OSCP).

It is found in the mitochondrion membrane. Subunit 8, of the mitochondrial membrane ATP synthase complex (F(1)F(0) ATP synthase or Complex V) that produces ATP from ADP in the presence of a proton gradient across the membrane which is generated by electron transport complexes of the respiratory chain. ATP synthase complex consist of a soluble F(1) head domain - the catalytic core - and a membrane F(1) domain - the membrane proton channel. These two domains are linked by a central stalk rotating inside the F(1) region and a stationary peripheral stalk. During catalysis, ATP synthesis in the catalytic domain of F(1) is coupled via a rotary mechanism of the central stalk subunits to proton translocation. In vivo, can only synthesize ATP although its ATP hydrolase activity can be activated artificially in vitro. Part of the complex F(0) domain. The sequence is that of ATP synthase F(0) complex subunit 8 from Columbina passerina (Common ground-dove).